Here is a 285-residue protein sequence, read N- to C-terminus: MSANDNWYIEHFQPTGSAIGFRISGKLDEVQSPFQKIEIYQTTDWGKLMLIDGAVMLTSRDNFFYHEMISHPALFTHPAPKRVVIIGGGDCGTLREVLKHPGVESATQCDIDEQVTRMSEKYFPELCDSNHDARAELLFDDGVAYMANCQAGSVDIVIVDSTDPVGPAEGLFNKAFYESCFKALKDDGILVQQSESPLALLDLINEMRTEMGKAGFQSFKTLPFPQPCYPTGWWSVTMASKQAKADFAFRQDAAQAKGFDTLYYTAHLHTGVLVAPPFVAKALGE.

Residues 5–241 enclose the PABS domain; that stretch reads DNWYIEHFQP…GWWSVTMASK (237 aa). Position 35 (Q35) interacts with S-methyl-5'-thioadenosine. The spermidine site is built by H66 and D90. S-methyl-5'-thioadenosine contacts are provided by residues D110 and 141-142; that span reads DG. D160 serves as the catalytic Proton acceptor. Spermidine is bound at residue 160-163; it reads DSTD. P167 provides a ligand contact to S-methyl-5'-thioadenosine.

The protein belongs to the spermidine/spermine synthase family. In terms of assembly, homodimer or homotetramer.

Its subcellular location is the cytoplasm. The enzyme catalyses S-adenosyl 3-(methylsulfanyl)propylamine + putrescine = S-methyl-5'-thioadenosine + spermidine + H(+). It participates in amine and polyamine biosynthesis; spermidine biosynthesis; spermidine from putrescine: step 1/1. In terms of biological role, catalyzes the irreversible transfer of a propylamine group from the amino donor S-adenosylmethioninamine (decarboxy-AdoMet) to putrescine (1,4-diaminobutane) to yield spermidine. In Xanthomonas axonopodis pv. citri (strain 306), this protein is Polyamine aminopropyltransferase.